A 154-amino-acid chain; its full sequence is Myoglobin (154 aa).

One can recognise a Globin domain in the interval 2–148 (GLSEGEWQLV…FRKDIAAKYK (147 aa)). Position 4 is a phosphoserine (serine 4). Histidine 65 contacts nitrite. O2 is bound at residue histidine 65. Residue threonine 68 is modified to Phosphothreonine. Heme b is bound at residue histidine 94.

In terms of assembly, monomer.

Its subcellular location is the cytoplasm. The protein localises to the sarcoplasm. The catalysed reaction is Fe(III)-heme b-[protein] + nitric oxide + H2O = Fe(II)-heme b-[protein] + nitrite + 2 H(+). It catalyses the reaction H2O2 + AH2 = A + 2 H2O. Functionally, monomeric heme protein which primary function is to store oxygen and facilitate its diffusion within muscle tissues. Reversibly binds oxygen through a pentacoordinated heme iron and enables its timely and efficient release as needed during periods of heightened demand. Depending on the oxidative conditions of tissues and cells, and in addition to its ability to bind oxygen, it also has a nitrite reductase activity whereby it regulates the production of bioactive nitric oxide. Under stress conditions, like hypoxia and anoxia, it also protects cells against reactive oxygen species thanks to its pseudoperoxidase activity. In Delphinapterus leucas (Beluga whale), this protein is Myoglobin (MB).